Here is a 290-residue protein sequence, read N- to C-terminus: uncharacterized protein (290 aa).

Disordered stretches follow at residues 105-156 and 259-290; these read LKHK…KLTV and EGAQ…KSKK. A compositionally biased stretch (polar residues) spans 114–130; sequence KATQQARKRNFISSKSK. Composition is skewed to basic and acidic residues over residues 143-156 and 261-280; these read RESK…KLTV and AQRD…EPVL.

This is an uncharacterized protein from Homo sapiens (Human).